The following is a 451-amino-acid chain: Adenylyltransferase and sulfurtransferase MOCS3 (451 aa).

Residues 42–62 are disordered; the sequence is GEDSDEAEESSNDMPTPQTKL. Residues 43-52 are compositionally biased toward acidic residues; it reads EDSDEAEESS. T60 bears the Phosphothreonine mark. ATP is bound by residues G99, D120, 127-131, K144, and 188-189; these read SNLHR and DN. Zn(2+) is bound by residues C229 and C232. Residue C246 is the Glycyl thioester intermediate; for adenylyltransferase activity of the active site. Zn(2+)-binding residues include C304 and C307. The 97-residue stretch at 353 to 449 folds into the Rhodanese domain; the sequence is QSQPHLLLDV…WTGSVDATFP (97 aa). C408 serves as the catalytic Cysteine persulfide intermediate; for sulfurtransferase activity.

In the N-terminal section; belongs to the HesA/MoeB/ThiF family. UBA4 subfamily. Zn(2+) serves as cofactor.

The protein localises to the cytoplasm. It is found in the cytosol. The enzyme catalyses [molybdopterin-synthase sulfur-carrier protein]-C-terminal Gly-Gly + ATP + H(+) = [molybdopterin-synthase sulfur-carrier protein]-C-terminal Gly-Gly-AMP + diphosphate. The catalysed reaction is [molybdopterin-synthase sulfur-carrier protein]-C-terminal Gly-Gly-AMP + S-sulfanyl-L-cysteinyl-[cysteine desulfurase] + AH2 = [molybdopterin-synthase sulfur-carrier protein]-C-terminal-Gly-aminoethanethioate + L-cysteinyl-[cysteine desulfurase] + A + AMP + 2 H(+). Its pathway is tRNA modification; 5-methoxycarbonylmethyl-2-thiouridine-tRNA biosynthesis. It participates in cofactor biosynthesis; molybdopterin biosynthesis. Its function is as follows. Plays a central role in 2-thiolation of mcm(5)S(2)U at tRNA wobble positions of cytosolic tRNA(Lys), tRNA(Glu) and tRNA(Gln). Also essential during biosynthesis of the molybdenum cofactor. Acts by mediating the C-terminal thiocarboxylation of sulfur carriers URM1 and MOCS2A. Its N-terminus first activates URM1 and MOCS2A as acyl-adenylates (-COAMP), then the persulfide sulfur on the catalytic cysteine is transferred to URM1 and MOCS2A to form thiocarboxylation (-COSH) of their C-terminus. The reaction probably involves hydrogen sulfide that is generated from the persulfide intermediate and that acts as a nucleophile towards URM1 and MOCS2A. Subsequently, a transient disulfide bond is formed. Does not use thiosulfate as sulfur donor; NFS1 probably acting as a sulfur donor for thiocarboxylation reactions. This is Adenylyltransferase and sulfurtransferase MOCS3 from Drosophila persimilis (Fruit fly).